A 383-amino-acid polypeptide reads, in one-letter code: 2-methylcitrate synthase 2 (383 aa).

The substrate site is built by Arg73 and His195. His230 is an active-site residue. CoA is bound at residue 263–267; sequence VVMGF. Residue His269 is part of the active site. Arg278 contacts substrate. Residue Asp320 is part of the active site. Substrate contacts are provided by Arg345 and Arg364.

This sequence belongs to the citrate synthase family. As to quaternary structure, homodimer.

It carries out the reaction propanoyl-CoA + oxaloacetate + H2O = (2S,3S)-2-methylcitrate + CoA + H(+). The catalysed reaction is oxaloacetate + acetyl-CoA + H2O = citrate + CoA + H(+). It functions in the pathway organic acid metabolism; propanoate degradation. Its pathway is carbohydrate metabolism; tricarboxylic acid cycle; isocitrate from oxaloacetate: step 1/2. Its function is as follows. Involved in the catabolism of short chain fatty acids (SCFA) via the tricarboxylic acid (TCA)(acetyl degradation route) and via the 2-methylcitrate cycle I (propionate degradation route). Catalyzes the Claisen condensation of propionyl-CoA and oxaloacetate (OAA) to yield 2-methylcitrate (2-MC) and CoA. Also catalyzes the condensation of oxaloacetate with acetyl-CoA but with a lower specificity. The polypeptide is 2-methylcitrate synthase 2 (prpC2) (Corynebacterium glutamicum (strain ATCC 13032 / DSM 20300 / JCM 1318 / BCRC 11384 / CCUG 27702 / LMG 3730 / NBRC 12168 / NCIMB 10025 / NRRL B-2784 / 534)).